Here is a 564-residue protein sequence, read N- to C-terminus: MTDISTGVQLKPGIGDGTVYNGNMSKDTLVNCSPDPENPEKGQASSPRTQISVDDNEESTTEYPSSWKLAMIMISLCLAVFCLALDTTIMATAIPKIADQFNSLNDVGWYGSAYLLTTSALTLSFGKLYSFYSIKWVYLQALGMFEIGSLICGATPNSLGLIIGRAIAGSGSAGIYSGSMLIVARSAPLERRPLLTGILGGLFGVASVVGPLIGGAFTDNLSWRWCFYINLPLGAVTGLFLILFFDGAKATTQRATIRDQLSQLDLLGSLCFLPAIICVLLALQWGGTTYPWHDGRIIALFTVFGVLLLAFAGVQWWRQEKATVPPRLIANRNVWGAALFSFCLNASFIIFTYYLPMWFQSIKGVTATQSGIMNLPMVLAVVIFSIISGGLVGALGYYTPFMVIAPLIAAIGAGLLSTLRMDSNNASWIGYQILYGVGVGCGLQQPIVAVQGSLAPADLPTGTVIVMFMQTIGGAIFMSVGQNVFQNQLMRNLATQAPSVDAARVLQAGATMLRKTVSSDLLPAALRAYNSAITEAFYVAVAMAVLALPGALVMQWISVKGRQL.

Asn23 is a glycosylation site (N-linked (GlcNAc...) asparagine). Residues 26–59 (KDTLVNCSPDPENPEKGQASSPRTQISVDDNEES) are disordered. The span at 43–53 (QASSPRTQISV) shows a compositional bias: polar residues. The next 4 helical transmembrane spans lie at 69-89 (LAMI…DTTI), 106-126 (DVGW…LSFG), 143-163 (GMFE…GLII), and 197-217 (GILG…GGAF). N-linked (GlcNAc...) asparagine glycosylation occurs at Asn220. 6 helical membrane passes run 225–245 (WCFY…ILFF), 266–286 (LLGS…LQWG), 297–317 (IIAL…VQWW), 339–359 (LFSF…PMWF), 375–395 (LPMV…VGAL), and 396–416 (GYYT…AGLL). An N-linked (GlcNAc...) asparagine glycan is attached at Asn425. The next 2 membrane-spanning stretches (helical) occupy residues 461–481 (TGTV…MSVG) and 537–557 (FYVA…MQWI).

This sequence belongs to the major facilitator superfamily. TCR/Tet family.

The protein resides in the membrane. MFS-type transporter; part of the gene cluster that mediates the biosynthesis of astellolides, drimane-type sesquiterpene esters that show antimicrobial, anti-inflammatory, and anti-tumor activities. Seems not to be involved in astellolides translocation. This is MFS-type transporter astH from Aspergillus oryzae (strain ATCC 42149 / RIB 40) (Yellow koji mold).